A 555-amino-acid polypeptide reads, in one-letter code: Potassium-transporting ATPase potassium-binding subunit (555 aa).

Transmembrane regions (helical) follow at residues 2 to 22 (IWVAVVITMLLFILVAKPTGI), 60 to 80 (QYALSLVLLNGFMIVVVYFIF), 130 to 150 (IGITFLMFAAPATTLALVMAF), 173 to 193 (VFLPIAFIAALVFVALGVPQT), 246 to 266 (MSNILQMMLMMLLPTALPFTY), 278 to 298 (ILFVSLFMVFLLGFITITTSE), 374 to 394 (AGFVNIIMYAIIAVFISGLMV), 412 to 432 (LIAVTILFHPLLILGFSALAL), 483 to 503 (LVMFLGRYFSLITMLAVAASL), and 525 to 545 (GIFIGTIVIVGALTFFPMLVL).

It belongs to the KdpA family. The system is composed of three essential subunits: KdpA, KdpB and KdpC.

It is found in the cell membrane. Its function is as follows. Part of the high-affinity ATP-driven potassium transport (or Kdp) system, which catalyzes the hydrolysis of ATP coupled with the electrogenic transport of potassium into the cytoplasm. This subunit binds the extracellular potassium ions and delivers the ions to the membrane domain of KdpB through an intramembrane tunnel. This chain is Potassium-transporting ATPase potassium-binding subunit, found in Bacillus cereus (strain 03BB102).